The primary structure comprises 661 residues: CD180 antigen (661 aa).

A signal peptide spans 1 to 23 (MAFDVSCFFWVVLFSAGCKVITS). Over 24-626 (WDQMCIEKEA…KLSDVKLSCG (603 aa)) the chain is Extracellular. An LRRNT domain is found at 33-53 (ANKTYNCENLGLSEIPDTLPN). N-linked (GlcNAc...) asparagine glycans are attached at residues asparagine 34, asparagine 53, asparagine 70, and asparagine 78. LRR repeat units lie at residues 54–75 (TTEFLEFSFNFLPTIHNRTFSR), 78–99 (NLTFLDLTRCQINWIHEDTFQS), 102–123 (QLSTLVLTGNPLIFMAETSLNG), 126–147 (SLKHLFLIQTGISNLEFIPVHN), 150–171 (NLESLYLGSNHISSIKFPKDFP), 174–195 (NLKVLDFQNNAIHYISREDMRS), and 201–221 (NLSLNFNGNNVKGIELGAFDS). Asparagine 201, asparagine 234, and asparagine 244 each carry an N-linked (GlcNAc...) asparagine glycan. 5 LRR repeats span residues 275–296 (SVESLNLQEHRFSDISSTTFQC), 299–320 (QLQELDLTATHLKGLPSGMKGL), 322–343 (LLKKLVLSVNHFDQLCQISAAN), 346–366 (SLTHLYIRGNVKKLHLGVGCL), and 371–391 (NLQTLDLSHNDIEASDCCSLQ). 2 N-linked (GlcNAc...) asparagine glycosylation sites follow: asparagine 394 and asparagine 402. LRR repeat units follow at residues 397-418 (HLQTLNLSHNEPLGLQSQAFKE), 421-442 (QLELLDLAFTRLHINAPQSPFQ), 446-466 (FLQVLNLTYCFLDTSNQHLLA), 470-493 (VLRHLNLKGNHFQDGTITKTNLLQ), 497-518 (SLEVLILSSCGLLSIDQQAFHS), 521-544 (KMSHVDLSHNSLTCDSIDSLSHLK), and 546-564 (IYLNLAANSINIISPRLLP). Asparagine 451 is a glycosylation site (N-linked (GlcNAc...) asparagine). Asparagine 573 is a glycosylation site (N-linked (GlcNAc...) asparagine). One can recognise an LRRCT domain in the interval 577–627 (NPLDCTCSNIHFLTWYKENLHKLEGSEETTCANPPSLRGVKLSDVKLSCGI). Residues 627-650 (ITAIGIFFLIVFLLLLAILLFFAV) traverse the membrane as a helical segment. The Cytoplasmic portion of the chain corresponds to 651 to 661 (KYLLRWKYQHI).

This sequence belongs to the Toll-like receptor family. M-shaped tetramer of two CD180-LY86 heterodimers. As to expression, expressed mainly on mature peripherical B cells. Detected in spleen, lymph node and appendix. Not detected in pre-B and -T cells.

The protein localises to the cell membrane. Functionally, may cooperate with MD-1 and TLR4 to mediate the innate immune response to bacterial lipopolysaccharide (LPS) in B-cells. Leads to NF-kappa-B activation. Also involved in the life/death decision of B-cells. The protein is CD180 antigen (CD180) of Homo sapiens (Human).